Here is a 150-residue protein sequence, read N- to C-terminus: Copper transporter 3 (150 aa).

A run of 2 helical transmembrane segments spans residues 50-70 (GGMY…LEFL) and 100-120 (LAYL…LAAV).

It belongs to the copper transporter (Ctr) (TC 1.A.56) family. SLC31A subfamily.

Its subcellular location is the membrane. Involved in the transport of copper. This is Copper transporter 3 (COPT3) from Oryza sativa subsp. japonica (Rice).